The sequence spans 227 residues: Uridylate kinase (227 aa).

An ATP-binding site is contributed by 6–10; sequence KVSGK. G43 serves as a coordination point for UMP. Residues G44 and R48 each contribute to the ATP site. Residues D65 and 113 to 119 contribute to the UMP site; that span reads FQPGQST. 4 residues coordinate ATP: T139, N140, Y145, and D148.

The protein belongs to the UMP kinase family. Homohexamer.

The protein resides in the cytoplasm. The enzyme catalyses UMP + ATP = UDP + ADP. It participates in pyrimidine metabolism; CTP biosynthesis via de novo pathway; UDP from UMP (UMPK route): step 1/1. With respect to regulation, inhibited by UTP. In terms of biological role, catalyzes the reversible phosphorylation of UMP to UDP. The protein is Uridylate kinase of Sulfolobus acidocaldarius (strain ATCC 33909 / DSM 639 / JCM 8929 / NBRC 15157 / NCIMB 11770).